The following is a 930-amino-acid chain: Progesterone receptor (930 aa).

Positions 1–11 (MTELKAKEPRA) are enriched in basic and acidic residues. 2 disordered regions span residues 1 to 133 (MTEL…ASPA) and 148 to 260 (LPED…SGAA). The tract at residues 1 to 165 (MTELKAKEPR…PATKGVLAPL (165 aa)) is AF3; mediates transcriptional activation. The modulating, Pro-Rich stretch occupies residues 1 to 565 (MTELKAKEPR…PQYSFESLPQ (565 aa)). Lysine 7 participates in a covalent cross-link: Glycyl lysine isopeptide (Lys-Gly) (interchain with G-Cter in SUMO). Serine 20 bears the Phosphoserine mark. Positions 38 to 49 (QGSQTSEASSVV) are enriched in polar residues. An LXXL motif 1 motif is present at residues 56-60 (LDGLL). Serine 82 carries the post-translational modification Phosphoserine. The LXXL motif 2 signature appears at 116–120 (LDTLL). Serine 131 bears the Phosphoserine mark. The tract at residues 166-304 (MSRPEDKAGD…LATSVVDFIH (139 aa)) is mediates transcriptional transrepression. The short motif at 184 to 188 (KVLPR) is the Nuclear localization signal element. Over residues 187 to 204 (PRGLSPSRQLLLPSSGSP) the composition is skewed to low complexity. Residues serine 191 and serine 212 each carry the phosphoserine modification. Serine 293 bears the Phosphoserine; by MAPK1 mark. The segment at 334–356 (AASPFVPQRGSPSASSTPVAGGD) is disordered. A Phosphoserine; by MAPK modification is found at serine 344. A Glycyl lysine isopeptide (Lys-Gly) (interchain with G-Cter in SUMO); alternate cross-link involves residue lysine 387. Lysine 387 participates in a covalent cross-link: Glycyl lysine isopeptide (Lys-Gly) (interchain with G-Cter in ubiquitin); alternate. Serine 399 is modified (phosphoserine; by CDK2). The interval 415-454 (DFQLAAPPPPSLPPRVPSSRPGEAAVAASPGSASVSSSSS) is disordered. Residues 420-430 (APPPPSLPPRV) show a composition bias toward pro residues. The segment covering 431-454 (PSSRPGEAAVAASPGSASVSSSSS) has biased composition (low complexity). The interval 457–547 (STLECILYKA…VYTPYLNYLR (91 aa)) is AF1; mediates transcriptional activation. A Glycyl lysine isopeptide (Lys-Gly) (interchain with G-Cter in SUMO) cross-link involves residue lysine 532. The nuclear receptor DNA-binding region spans 566–640 (KICLICGDEA…AGMVLGGRKF (75 aa)). 2 NR C4-type zinc fingers span residues 568-588 (CLIC…CGSC) and 604-628 (CAGR…LRKC). At serine 673 the chain carries Phosphoserine. The NR LBD domain maps to 676-910 (QEIQLIPPLI…EFPEMMSEVI (235 aa)). The segment at 684–930 (LINLLMSIEP…MVKPLLFHKK (247 aa)) is AF2; mediates transcriptional activation. Residue arginine 763 coordinates progesterone.

It belongs to the nuclear hormone receptor family. NR3 subfamily. In terms of assembly, interacts with SMARD1 and UNC45A. Interacts with CUEDC2; the interaction promotes ubiquitination, decreases sumoylation, and represses transcriptional activity. Interacts with PIAS3; the interaction promotes sumoylation of PR in a hormone-dependent manner, inhibits DNA-binding, and alters nuclear export. Interacts with SP1; the interaction requires ligand-induced phosphorylation on Ser-344 by ERK1/2-MAPK. Interacts with PRMT2. Interacts with NCOA2 and NCOA1. Interacts with KLF9. Interacts with GTF2B. Post-translationally, phosphorylated on multiple serine sites. Several of these sites are hormone-dependent. Phosphorylation on Ser-293 is highly hormone-dependent and modulates ubiquitination and sumoylation on Lys-387. Phosphorylation on Ser-102 and Ser-344 also requires induction by hormone. Basal phosphorylation on Ser-82, Ser-191 and Ser-399 is increased in response to progesterone and can be phosphorylated in vitro by the CDK2-A1 complex. Increased levels of phosphorylation on Ser-399 also in the presence of EGF, heregulin, IGF, PMA and FBS. Phosphorylation at this site by CDK2 is ligand-independent, and increases nuclear translocation and transcriptional activity. Phosphorylation at Ser-293, but not at Ser-191, is impaired during the G(2)/M phase of the cell cycle. Phosphorylation on Ser-344 by ERK1/2 MAPK is required for interaction with SP1. Sumoylation is hormone-dependent and represses transcriptional activity. Sumoylation on all three sites is enhanced by PIAS3. Desumoylated by SENP1. Sumoylation on Lys-387, the main site of sumoylation, is repressed by ubiquitination on the same site, and modulated by phosphorylation at Ser-293. In terms of processing, ubiquitination is hormone-dependent and represses sumoylation on the same site. Promoted by MAPK-mediated phosphorylation on Ser-293. Ubiquitinated by UBR5, leading to its degradation: UBR5 specifically recognizes and binds ligand-bound PGR when it is not associated with coactivators (NCOAs). In presence of NCOAs, the UBR5-degron is not accessible, preventing its ubiquitination and degradation. Post-translationally, palmitoylated by ZDHHC7 and ZDHHC21. Palmitoylation is required for plasma membrane targeting and for rapid intracellular signaling via ERK and AKT kinases and cAMP generation.

It is found in the nucleus. Its subcellular location is the cytoplasm. In terms of biological role, the steroid hormones and their receptors are involved in the regulation of eukaryotic gene expression and affect cellular proliferation and differentiation in target tissues. Transcriptional activator of several progesteron-dependent promoters in a variety of cell types. Involved in activation of SRC-dependent MAPK signaling on hormone stimulation. This chain is Progesterone receptor (PGR), found in Oryctolagus cuniculus (Rabbit).